The following is a 489-amino-acid chain: Ketol-acid reductoisomerase (NADP(+)) (489 aa).

One can recognise a KARI N-terminal Rossmann domain in the interval 16 to 207 (IKKCRFMEKK…GGHRAGVLES (192 aa)). NADP(+) is bound by residues 44-47 (CGSQ), Arg-67, Ser-77, and 107-109 (DKQ). His-131 is an active-site residue. Gly-157 lines the NADP(+) pocket. 2 KARI C-terminal knotted domains span residues 208 to 343 (SFVA…QSPD) and 344 to 483 (YDKK…MKNM). Mg(2+)-binding residues include Asp-216, Glu-220, Glu-388, and Glu-392. Ser-413 serves as a coordination point for substrate.

The protein belongs to the ketol-acid reductoisomerase family. Requires Mg(2+) as cofactor.

It catalyses the reaction (2R)-2,3-dihydroxy-3-methylbutanoate + NADP(+) = (2S)-2-acetolactate + NADPH + H(+). The catalysed reaction is (2R,3R)-2,3-dihydroxy-3-methylpentanoate + NADP(+) = (S)-2-ethyl-2-hydroxy-3-oxobutanoate + NADPH + H(+). Its pathway is amino-acid biosynthesis; L-isoleucine biosynthesis; L-isoleucine from 2-oxobutanoate: step 2/4. It functions in the pathway amino-acid biosynthesis; L-valine biosynthesis; L-valine from pyruvate: step 2/4. Involved in the biosynthesis of branched-chain amino acids (BCAA). Catalyzes an alkyl-migration followed by a ketol-acid reduction of (S)-2-acetolactate (S2AL) to yield (R)-2,3-dihydroxy-isovalerate. In the isomerase reaction, S2AL is rearranged via a Mg-dependent methyl migration to produce 3-hydroxy-3-methyl-2-ketobutyrate (HMKB). In the reductase reaction, this 2-ketoacid undergoes a metal-dependent reduction by NADPH to yield (R)-2,3-dihydroxy-isovalerate. The protein is Ketol-acid reductoisomerase (NADP(+)) of Buchnera aphidicola subsp. Diuraphis noxia.